An 89-amino-acid chain; its full sequence is Small ribosomal subunit protein uS15 (89 aa).

The protein belongs to the universal ribosomal protein uS15 family. As to quaternary structure, part of the 30S ribosomal subunit. Forms a bridge to the 50S subunit in the 70S ribosome, contacting the 23S rRNA.

Functionally, one of the primary rRNA binding proteins, it binds directly to 16S rRNA where it helps nucleate assembly of the platform of the 30S subunit by binding and bridging several RNA helices of the 16S rRNA. In terms of biological role, forms an intersubunit bridge (bridge B4) with the 23S rRNA of the 50S subunit in the ribosome. This is Small ribosomal subunit protein uS15 from Rippkaea orientalis (strain PCC 8801 / RF-1) (Cyanothece sp. (strain PCC 8801)).